The following is a 479-amino-acid chain: Glycogen synthase (479 aa).

Position 15 (Lys-15) interacts with ADP-alpha-D-glucose.

This sequence belongs to the glycosyltransferase 1 family. Bacterial/plant glycogen synthase subfamily.

It catalyses the reaction [(1-&gt;4)-alpha-D-glucosyl](n) + ADP-alpha-D-glucose = [(1-&gt;4)-alpha-D-glucosyl](n+1) + ADP + H(+). Its pathway is glycan biosynthesis; glycogen biosynthesis. Functionally, synthesizes alpha-1,4-glucan chains using ADP-glucose. The protein is Glycogen synthase of Histophilus somni (strain 129Pt) (Haemophilus somnus).